Here is a 159-residue protein sequence, read N- to C-terminus: Cyclic pyranopterin monophosphate synthase (159 aa).

Residues 75-77 (LCH) and 113-114 (ME) each bind substrate. The active site involves Asp-128.

The protein belongs to the MoaC family. In terms of assembly, homohexamer; trimer of dimers.

The catalysed reaction is (8S)-3',8-cyclo-7,8-dihydroguanosine 5'-triphosphate = cyclic pyranopterin phosphate + diphosphate. Its pathway is cofactor biosynthesis; molybdopterin biosynthesis. Its function is as follows. Catalyzes the conversion of (8S)-3',8-cyclo-7,8-dihydroguanosine 5'-triphosphate to cyclic pyranopterin monophosphate (cPMP). This is Cyclic pyranopterin monophosphate synthase from Burkholderia multivorans (strain ATCC 17616 / 249).